We begin with the raw amino-acid sequence, 170 residues long: N-glycosidase R617 (170 aa).

Belongs to the YbiA family.

The enzyme catalyses 2,5-diamino-6-hydroxy-4-(5-phosphoribosylamino)-pyrimidine + H2O = 2,5,6-triamino-4-hydroxypyrimidine + D-ribose 5-phosphate. It carries out the reaction 5-amino-6-(5-phospho-D-ribosylamino)uracil + H2O = 5,6-diaminouracil + D-ribose 5-phosphate. Functionally, catalyzes the hydrolysis of the N-glycosidic bond in the first two intermediates of riboflavin biosynthesis, which are highly reactive metabolites, yielding relatively innocuous products. Thus, can divert a surplus of harmful intermediates into relatively harmless products and pre-empt the damage these intermediates would otherwise do. May act on other substrates in vivo. This chain is N-glycosidase R617, found in Acanthamoeba polyphaga mimivirus (APMV).